Reading from the N-terminus, the 460-residue chain is Argininosuccinate lyase (460 aa).

Belongs to the lyase 1 family. Argininosuccinate lyase subfamily.

It is found in the cytoplasm. The catalysed reaction is 2-(N(omega)-L-arginino)succinate = fumarate + L-arginine. It participates in amino-acid biosynthesis; L-arginine biosynthesis; L-arginine from L-ornithine and carbamoyl phosphate: step 3/3. The polypeptide is Argininosuccinate lyase (Campylobacter jejuni subsp. doylei (strain ATCC BAA-1458 / RM4099 / 269.97)).